A 407-amino-acid chain; its full sequence is E3 ubiquitin-protein ligase TRIM13 (407 aa).

The RING-type zinc-finger motif lies at 10–58 (CPICCSLFDDPRVLPCSHNFCKKCLEGLLEGNVRNSLWRPSPFKCPTCR). The segment at 89–131 (PKMPVCKGHLGQPLNIFCVTDMQLICGICATRGEHTKHVFSSI) adopts a B box-type zinc-finger fold. Zn(2+) contacts are provided by cysteine 94, histidine 97, cysteine 117, and histidine 123. The stretch at 172 to 200 (LQLLTKDSDKVKEFFEKLQHTLDQKKNEI) forms a coiled coil. Residues 316–336 (LLLMMVVLLGLLIFFGPTVFL) form a helical membrane-spanning segment.

It belongs to the TRIM/RBCC family. Interacts (via C-terminal domain) with VCP. Interacts with AKT1; the interaction ubiquitinates AKT1 and leads to its proteasomal degradation. Interacts with MDM2; the interaction ubiquitinates AKT1 and leads to its proteasomal degradation. Interacts with p62/SQSTM1. Interacts with TRAF6. Interacts with IKBKG/NEMO. In terms of processing, auto-ubiquitinated; requires the RING-type zinc finger. Auto-polyubiquitination leads to proteasomal degradation.

It localises to the endoplasmic reticulum membrane. The catalysed reaction is S-ubiquitinyl-[E2 ubiquitin-conjugating enzyme]-L-cysteine + [acceptor protein]-L-lysine = [E2 ubiquitin-conjugating enzyme]-L-cysteine + N(6)-ubiquitinyl-[acceptor protein]-L-lysine.. It participates in protein modification; protein ubiquitination. In terms of biological role, endoplasmic reticulum (ER) membrane anchored E3 ligase involved in the retrotranslocation and turnover of membrane and secretory proteins from the ER through a set of processes named ER-associated degradation (ERAD). This process acts on misfolded proteins as well as in the regulated degradation of correctly folded proteins. Enhances ionizing radiation-induced p53/TP53 stability and apoptosis via ubiquitinating MDM2 and AKT1 and decreasing AKT1 kinase activity through MDM2 and AKT1 proteasomal degradation. Regulates ER stress-induced autophagy, and may act as a tumor suppressor. Also plays a role in innate immune response by stimulating NF-kappa-B activity in the TLR2 signaling pathway. Ubiquitinates TRAF6 via the 'Lys-29'-linked polyubiquitination chain resulting in NF-kappa-B activation. Participates as well in T-cell receptor-mediated NF-kappa-B activation. In the presence of TNF, modulates the IKK complex by regulating IKBKG/NEMO ubiquitination leading to the repression of NF-kappa-B. The polypeptide is E3 ubiquitin-protein ligase TRIM13 (Trim13) (Mus musculus (Mouse)).